A 407-amino-acid polypeptide reads, in one-letter code: Arylacetamide deacetylase-like 4 (407 aa).

The Cytoplasmic segment spans residues 1-4 (MAVP). Residues 5 to 25 (WLVLLLALPIFFLGVFVWAVF) traverse the membrane as a helical; Signal-anchor for type II membrane protein segment. The Lumenal portion of the chain corresponds to 26 to 407 (EHFLTTDIPA…NAVVSYIKGI (382 aa)). The Involved in the stabilization of the negatively charged intermediate by the formation of the oxyanion hole motif lies at 119–121 (HGG). Asn168 carries N-linked (GlcNAc...) asparagine glycosylation. Ser193 is a catalytic residue. Residue Asn269 is glycosylated (N-linked (GlcNAc...) asparagine). Catalysis depends on residues Asp347 and His377.

This sequence belongs to the 'GDXG' lipolytic enzyme family.

The protein localises to the membrane. The chain is Arylacetamide deacetylase-like 4 (AADACL4) from Homo sapiens (Human).